The chain runs to 860 residues: Leucine--tRNA ligase (860 aa).

A 'HIGH' region motif is present at residues 42-52; the sequence is PYPSGRLHMGH. The 'KMSKS' region motif lies at 619–623; sequence KMSKS. Lysine 622 provides a ligand contact to ATP.

Belongs to the class-I aminoacyl-tRNA synthetase family.

It is found in the cytoplasm. It catalyses the reaction tRNA(Leu) + L-leucine + ATP = L-leucyl-tRNA(Leu) + AMP + diphosphate. The sequence is that of Leucine--tRNA ligase from Erwinia tasmaniensis (strain DSM 17950 / CFBP 7177 / CIP 109463 / NCPPB 4357 / Et1/99).